A 384-amino-acid polypeptide reads, in one-letter code: UPF0496 protein At3g28310/At3g28320 (384 aa).

The stretch at 184–215 (QESLFDRVTETKERIAKEIEEVQKRISNVNTA) forms a coiled coil. A run of 2 helical transmembrane segments spans residues 217 to 237 (IVSH…CIAL) and 242 to 262 (VGAP…VQWV). Residues 264–361 (VNYVLNNSLE…TTKITEVCET (98 aa)) adopt a coiled-coil conformation.

It belongs to the UPF0496 family.

The protein localises to the membrane. This is UPF0496 protein At3g28310/At3g28320 from Arabidopsis thaliana (Mouse-ear cress).